A 289-amino-acid polypeptide reads, in one-letter code: MDIEIKDVEHRYQMKTPFERLAIYDVNAVIKEGSYVAVIGHTGSGKSTLLQHLNGLLKPTKGQIRLGEDVLEAGKKNKHLKALRKKVGIVFQFPEHQLFEETILKDIAFGPINFGMSREKAEEKAREMLKLVGLGAELSDRSPFELSGGQMRRVAIAGVLAMEPEVLVLDEPTAGLDPRGRKEIMDMFYSLHKQRNLTTILVTHSMEDAAAYADELIVMHKGTVKAKGTPRELFSRKDDIAALGLDLPETIKFQKRLEETLGITFKAPILTIEEAASEVKALFQEENAL.

Positions 3 to 246 (IEIKDVEHRY…KDDIAALGLD (244 aa)) constitute an ABC transporter domain. ATP is bound at residue 40 to 47 (GHTGSGKS).

Belongs to the ABC transporter superfamily. Energy-coupling factor EcfA family. In terms of assembly, forms a stable energy-coupling factor (ECF) transporter complex composed of 2 membrane-embedded substrate-binding proteins (S component), 2 ATP-binding proteins (A component) and 2 transmembrane proteins (T component).

It localises to the cell membrane. Functionally, ATP-binding (A) component of a common energy-coupling factor (ECF) ABC-transporter complex. Unlike classic ABC transporters this ECF transporter provides the energy necessary to transport a number of different substrates. This chain is Energy-coupling factor transporter ATP-binding protein EcfA2, found in Bacillus licheniformis (strain ATCC 14580 / DSM 13 / JCM 2505 / CCUG 7422 / NBRC 12200 / NCIMB 9375 / NCTC 10341 / NRRL NRS-1264 / Gibson 46).